Here is a 104-residue protein sequence, read N- to C-terminus: Flagellar hook-basal body complex protein FliE (104 aa).

It belongs to the FliE family.

The protein resides in the bacterial flagellum basal body. This is Flagellar hook-basal body complex protein FliE from Pectobacterium atrosepticum (strain SCRI 1043 / ATCC BAA-672) (Erwinia carotovora subsp. atroseptica).